A 162-amino-acid polypeptide reads, in one-letter code: Beta-carotene hydroxylase (162 aa).

The Fatty acid hydroxylase domain maps to 8 to 135 (VATVLVMELT…GRDHCVSFGF (128 aa)).

It belongs to the sterol desaturase family.

The enzyme catalyses all-trans-beta-carotene + 4 reduced [2Fe-2S]-[ferredoxin] + 2 O2 + 4 H(+) = all-trans-zeaxanthin + 4 oxidized [2Fe-2S]-[ferredoxin] + 2 H2O. It participates in carotenoid biosynthesis; astaxanthin biosynthesis. Functionally, catalyzes the hydroxylation reaction from beta-carotene to zeaxanthin via beta-cryptoxanthin. The chain is Beta-carotene hydroxylase (crtZ) from Paracoccus sp. (strain N81106 / MBIC 01143) (Agrobacterium aurantiacum).